Reading from the N-terminus, the 507-residue chain is Iroquois-class homeodomain protein IRX-3 (507 aa).

Residues 19–39 (RPGAAGGGGGGSSAGGRSGPG) form a disordered region. The span at 22–39 (AAGGGGGGSSAGGRSGPG) shows a compositional bias: gly residues. The homeobox; TALE-type DNA-binding region spans 130–192 (DPSRPKNATR…NARRRLKKEN (63 aa)). 2 disordered regions span residues 193 to 398 (KMTW…AAAA) and 416 to 468 (RPFP…SGTD). 2 stretches are compositionally biased toward acidic residues: residues 213 to 223 (REEEDEEEDEE) and 230 to 261 (EMEEEELAGEEEDTGGEGLADDDEDEEIDLEN). Composition is skewed to pro residues over residues 314–342 (APPPPPVARAPASPPSPPSSLDPCAPAPA) and 418–428 (FPGPPAGPRPH). Phosphoserine occurs at positions 326 and 329. Low complexity predominate over residues 436 to 460 (APQHLLGLPGAAGHPAAAAAAYARP).

This sequence belongs to the TALE/IRO homeobox family. Expressed by neural progenitor cells in discrete domains of the ventral neural tube. Also expressed in specific and overlapping patterns with Irx1 and Irx2 in the developing and adult metanephric kidney. In the adult metanephros, renal expression is confined to the S3 segment of the proximal tubule, in the loop of Henle.

It localises to the nucleus. Functionally, transcription factor involved in SHH-dependent neural patterning. Together with NKX2-2 and NKX6-1 acts to restrict the generation of motor neurons to the appropriate region of the neural tube. Belongs to the class I proteins of neuronal progenitor factors, which are repressed by SHH signals. Involved in the transcriptional repression of MNX1 in non-motor neuron cells. Acts as a regulator of energy metabolism. The polypeptide is Iroquois-class homeodomain protein IRX-3 (Irx3) (Mus musculus (Mouse)).